The following is a 526-amino-acid chain: Putative D-lactate dehydrogenase C713.03, mitochondrial (526 aa).

The 180-residue stretch at 93–272 folds into the FAD-binding PCMH-type domain; sequence YRGKTQLALK…TKLSVICPKR (180 aa).

It belongs to the FAD-binding oxidoreductase/transferase type 4 family. It depends on FAD as a cofactor.

The protein localises to the mitochondrion matrix. The enzyme catalyses (R)-lactate + 2 Fe(III)-[cytochrome c] = 2 Fe(II)-[cytochrome c] + pyruvate + 2 H(+). The chain is Putative D-lactate dehydrogenase C713.03, mitochondrial from Schizosaccharomyces pombe (strain 972 / ATCC 24843) (Fission yeast).